Reading from the N-terminus, the 460-residue chain is ATP synthase subunit beta (460 aa).

Residue 149–156 coordinates ATP; it reads GGAGVGKT.

This sequence belongs to the ATPase alpha/beta chains family. In terms of assembly, F-type ATPases have 2 components, CF(1) - the catalytic core - and CF(0) - the membrane proton channel. CF(1) has five subunits: alpha(3), beta(3), gamma(1), delta(1), epsilon(1). CF(0) has three main subunits: a(1), b(2) and c(9-12). The alpha and beta chains form an alternating ring which encloses part of the gamma chain. CF(1) is attached to CF(0) by a central stalk formed by the gamma and epsilon chains, while a peripheral stalk is formed by the delta and b chains.

It localises to the cell inner membrane. The catalysed reaction is ATP + H2O + 4 H(+)(in) = ADP + phosphate + 5 H(+)(out). Functionally, produces ATP from ADP in the presence of a proton gradient across the membrane. The catalytic sites are hosted primarily by the beta subunits. This Nitrosomonas europaea (strain ATCC 19718 / CIP 103999 / KCTC 2705 / NBRC 14298) protein is ATP synthase subunit beta.